The primary structure comprises 376 residues: Chaperone protein DnaJ (376 aa).

Positions 4–69 (DFYETLGVQK…QKRAAYDRFG (66 aa)) constitute a J domain. The CR-type zinc finger occupies 133-211 (GKTAQIRVPA…CAGQGRVTEE (79 aa)). The Zn(2+) site is built by Cys-146, Cys-149, Cys-163, Cys-166, Cys-185, Cys-188, Cys-199, and Cys-202. CXXCXGXG motif repeat units follow at residues 146–153 (CTECSGSG), 163–170 (CSMCHGHG), 185–192 (CPQCQGRG), and 199–206 (CPKCAGQG).

Belongs to the DnaJ family. As to quaternary structure, homodimer. Zn(2+) is required as a cofactor.

It localises to the cytoplasm. Functionally, participates actively in the response to hyperosmotic and heat shock by preventing the aggregation of stress-denatured proteins and by disaggregating proteins, also in an autonomous, DnaK-independent fashion. Unfolded proteins bind initially to DnaJ; upon interaction with the DnaJ-bound protein, DnaK hydrolyzes its bound ATP, resulting in the formation of a stable complex. GrpE releases ADP from DnaK; ATP binding to DnaK triggers the release of the substrate protein, thus completing the reaction cycle. Several rounds of ATP-dependent interactions between DnaJ, DnaK and GrpE are required for fully efficient folding. Also involved, together with DnaK and GrpE, in the DNA replication of plasmids through activation of initiation proteins. In Mesorhizobium japonicum (strain LMG 29417 / CECT 9101 / MAFF 303099) (Mesorhizobium loti (strain MAFF 303099)), this protein is Chaperone protein DnaJ.